The sequence spans 1087 residues: Alpha-mannosidase G (1087 aa).

4 residues coordinate Zn(2+): histidine 264, aspartate 266, aspartate 376, and histidine 579. Residue aspartate 376 is the Nucleophile of the active site.

Belongs to the glycosyl hydrolase 38 family. The cofactor is Zn(2+).

It carries out the reaction Hydrolysis of terminal, non-reducing alpha-D-mannose residues in alpha-D-mannosides.. The sequence is that of Alpha-mannosidase G (manG) from Dictyostelium discoideum (Social amoeba).